The sequence spans 118 residues: uncharacterized protein (118 aa).

This is an uncharacterized protein from Haemophilus influenzae (strain ATCC 51907 / DSM 11121 / KW20 / Rd).